The following is a 526-amino-acid chain: Bifunctional purine biosynthesis protein PurH (526 aa).

The region spanning 1–145 (MIRTALLSVS…KNHQDVTVLI (145 aa)) is the MGS-like domain.

This sequence belongs to the PurH family.

The catalysed reaction is (6R)-10-formyltetrahydrofolate + 5-amino-1-(5-phospho-beta-D-ribosyl)imidazole-4-carboxamide = 5-formamido-1-(5-phospho-D-ribosyl)imidazole-4-carboxamide + (6S)-5,6,7,8-tetrahydrofolate. It carries out the reaction IMP + H2O = 5-formamido-1-(5-phospho-D-ribosyl)imidazole-4-carboxamide. Its pathway is purine metabolism; IMP biosynthesis via de novo pathway; 5-formamido-1-(5-phospho-D-ribosyl)imidazole-4-carboxamide from 5-amino-1-(5-phospho-D-ribosyl)imidazole-4-carboxamide (10-formyl THF route): step 1/1. It functions in the pathway purine metabolism; IMP biosynthesis via de novo pathway; IMP from 5-formamido-1-(5-phospho-D-ribosyl)imidazole-4-carboxamide: step 1/1. The chain is Bifunctional purine biosynthesis protein PurH from Polynucleobacter asymbioticus (strain DSM 18221 / CIP 109841 / QLW-P1DMWA-1) (Polynucleobacter necessarius subsp. asymbioticus).